A 514-amino-acid polypeptide reads, in one-letter code: 5'-AMP-activated protein kinase subunit gamma-3 (514 aa).

Disordered stretches follow at residues 1-121 (MELA…FPKA) and 134-155 (DNPP…SDSN). Residues 59–71 (SRSWPSRAVTTSS) show a composition bias toward polar residues. CBS domains follow at residues 222–283 (MATS…RSPL), 305–363 (CFKP…GTLL), and 380–440 (TFRD…HLDM). ADP contacts are provided by residues Arg250, 265–270 (MLTITD), Val310, 331–332 (HR), and Lys350. Residues Arg250, 265-270 (MLTITD), Val310, His331, 331-332 (HR), Lys350, Thr380, Ala385, 406-407 (SA), 422-425 (SRFD), Arg449, Leu457, His478, 478-479 (HR), and 494-497 (SLSD) contribute to the AMP site. Residues Arg250, 265 to 270 (MLTITD), Val310, 331 to 332 (HR), Arg332, and Lys350 contribute to the ATP site. An AMPK pseudosubstrate motif is present at residues 318–339 (LFEAVYALIKNRIHRLPVLDPV). ADP is bound by residues 422–425 (SRFD), Arg449, Leu457, and 478–479 (HR). ATP-binding positions include 422–425 (SRFD), Arg449, Leu457, and 478–479 (HR). The 60-residue stretch at 452–511 (CLEGVLSCQPHETLGEVIDRIVREQVHRLVLVDETQHLLGVVSLSDILQALVLSPAGIDA) folds into the CBS 4 domain.

It belongs to the 5'-AMP-activated protein kinase gamma subunit family. AMPK is a heterotrimer of an alpha catalytic subunit (PRKAA1 or PRKAA2), a beta (PRKAB1 or PRKAB2) and a gamma non-catalytic subunits (PRKAG1, PRKAG2 or PRKAG3). Interacts with FNIP1 and FNIP2. Post-translationally, phosphorylated by ULK1; leading to negatively regulate AMPK activity and suggesting the existence of a regulatory feedback loop between ULK1 and AMPK. In terms of processing, glycosylated; O-GlcNAcylated by OGT, promoting the AMP-activated protein kinase (AMPK) activity. Muscle.

Its function is as follows. AMP/ATP-binding subunit of AMP-activated protein kinase (AMPK), an energy sensor protein kinase that plays a key role in regulating cellular energy metabolism. In response to reduction of intracellular ATP levels, AMPK activates energy-producing pathways and inhibits energy-consuming processes: inhibits protein, carbohydrate and lipid biosynthesis, as well as cell growth and proliferation. AMPK acts via direct phosphorylation of metabolic enzymes, and by longer-term effects via phosphorylation of transcription regulators. AMPK also acts as a regulator of cellular polarity by remodeling the actin cytoskeleton; probably by indirectly activating myosin. The AMPK gamma3 subunit is a non-catalytic subunit with a regulatory role in muscle energy metabolism. It mediates binding to AMP, ADP and ATP, leading to AMPK activation or inhibition: AMP-binding results in allosteric activation of alpha catalytic subunit (PRKAA1 or PRKAA2) both by inducing phosphorylation and preventing dephosphorylation of catalytic subunits. ADP also stimulates phosphorylation, without stimulating already phosphorylated catalytic subunit. ATP promotes dephosphorylation of catalytic subunit, rendering the AMPK enzyme inactive. The chain is 5'-AMP-activated protein kinase subunit gamma-3 (PRKAG3) from Sus scrofa (Pig).